The following is a 197-amino-acid chain: Large ribosomal subunit protein bL17 (197 aa).

Positions 136–197 are disordered; that stretch reads RAAKKADAPQ…DAEKSSDTEK (62 aa). Residues 148 to 187 show a composition bias toward acidic residues; the sequence is VADEATDADESVEDEAPAQDDSADEVEAAADETPADDAEA. Basic and acidic residues predominate over residues 188 to 197; that stretch reads DAEKSSDTEK.

This sequence belongs to the bacterial ribosomal protein bL17 family. As to quaternary structure, part of the 50S ribosomal subunit. Contacts protein L32.

In Beutenbergia cavernae (strain ATCC BAA-8 / DSM 12333 / CCUG 43141 / JCM 11478 / NBRC 16432 / NCIMB 13614 / HKI 0122), this protein is Large ribosomal subunit protein bL17.